A 1091-amino-acid polypeptide reads, in one-letter code: Protein CTR9 homolog (1091 aa).

Residue A2 is modified to N-acetylalanine. TPR repeat units follow at residues 90–127 (GAYY…DMHE), 128–161 (PSTW…APDN), 163–195 (PALL…FPGC), 197–230 (AAVR…DPDN), 232–267 (EALV…YPYC), 305–338 (SHSF…TNNN), 343–376 (VFPY…YPDN), 377–410 (CETL…DPRD), 412–443 (QAFV…MKKG), 449–482 (IEVL…GIWI), 558–591 (IDAY…DDKN), 593–625 (NALS…TDGK), 640–673 (AAMR…HNSN), 674–707 (MYAA…ASGS), 713–746 (PDVW…FFYN), and 749–782 (SQIL…TPSN). The disordered stretch occupies residues 919 to 1091 (FQRIKEQWKS…EEEEEEEEAN (173 aa)). Residues 951–965 (ERRRKKGGKRRKKDK) show a composition bias toward basic residues. Composition is skewed to acidic residues over residues 974–993 (DDEE…DEDA), 1003–1016 (MTTQ…DDDA), 1026–1035 (EDPDVDDDEV), and 1080–1091 (NMEEEEEEEEAN).

Component of the nuclear PAF1 complex (PAF1C), which consists of VIP2/ELF7/PAF1, VIP3/SKI8/WDR61, VIP4/LEO1, VIP5/RTF1, VIP6/ELF8/CTR9 and CDC73. Interacts with VIP3 and VIP4. In terms of tissue distribution, expressed in roots, leaves and shoot apex.

The protein localises to the nucleus. Its function is as follows. Component of the PAF1 complex (PAF1C) which is involved in histone modifications such as methylation on histone H3 'Lys-4' (H3K4me3). Involved in regulation of flowering time. Required for the expression of the MADS box genes and flowering repressors FLC, AGL27/FLM and AGL31/MAF2. Required for histone H3 trimethylation on 'Lys-4' H3K4me3 at the FLC and AGL27/FLM loci. Involved in the control of seed dormancy and germination. This is Protein CTR9 homolog from Arabidopsis thaliana (Mouse-ear cress).